The sequence spans 197 residues: U1 small nuclear ribonucleoprotein C (197 aa).

A Matrin-type zinc finger spans residues 4-36 (YYCEYCDIYLTHSSPVGRRQHNQGRKHISAKIE). Low complexity predominate over residues 128–137 (FHNNKRINNI). Residues 128 to 178 (FHNNKRINNIPKPYNNYTNKPITNSSYKNDKQDYRNNNESNDNMNSNNFSN) are disordered. Over residues 142–154 (NNYTNKPITNSSY) the composition is skewed to polar residues. Low complexity predominate over residues 164–178 (NNESNDNMNSNNFSN).

This sequence belongs to the U1 small nuclear ribonucleoprotein C family. As to quaternary structure, U1 snRNP is composed of the 7 core Sm proteins B/B', D1, D2, D3, E, F and G that assemble in a heptameric protein ring on the Sm site of the small nuclear RNA to form the core snRNP, and at least 3 U1 snRNP-specific proteins U1-70K, U1-A and U1-C. U1-C interacts with U1 snRNA and the 5' splice-site region of the pre-mRNA.

It localises to the nucleus. Its function is as follows. Component of the spliceosomal U1 snRNP, which is essential for recognition of the pre-mRNA 5' splice-site and the subsequent assembly of the spliceosome. U1-C is directly involved in initial 5' splice-site recognition for both constitutive and regulated alternative splicing. The interaction with the 5' splice-site seems to precede base-pairing between the pre-mRNA and the U1 snRNA. Stimulates commitment or early (E) complex formation by stabilizing the base pairing of the 5' end of the U1 snRNA and the 5' splice-site region. This Plasmodium berghei (strain Anka) protein is U1 small nuclear ribonucleoprotein C (SNRPC).